Consider the following 466-residue polypeptide: Glutamate--tRNA ligase 1 (466 aa).

The 'HIGH' region motif lies at 9–19 (PSPTGLLHIGN). Residues 238 to 242 (KLSKR) carry the 'KMSKS' region motif. Lys-241 contacts ATP.

This sequence belongs to the class-I aminoacyl-tRNA synthetase family. Glutamate--tRNA ligase type 1 subfamily. Monomer.

It localises to the cytoplasm. It catalyses the reaction tRNA(Glu) + L-glutamate + ATP = L-glutamyl-tRNA(Glu) + AMP + diphosphate. In terms of biological role, catalyzes the attachment of glutamate to tRNA(Glu) in a two-step reaction: glutamate is first activated by ATP to form Glu-AMP and then transferred to the acceptor end of tRNA(Glu). The protein is Glutamate--tRNA ligase 1 of Gluconacetobacter diazotrophicus (strain ATCC 49037 / DSM 5601 / CCUG 37298 / CIP 103539 / LMG 7603 / PAl5).